Here is a 75-residue protein sequence, read N- to C-terminus: UPF0352 protein YejL (75 aa).

This sequence belongs to the UPF0352 family.

This chain is UPF0352 protein YejL, found in Shigella flexneri.